The primary structure comprises 274 residues: Eukaryotic translation initiation factor 3 subunit G (274 aa).

Positions 192-270 (TAIRISNLSN…LILNVEWSKP (79 aa)) constitute an RRM domain.

The protein belongs to the eIF-3 subunit G family. Component of the eukaryotic translation initiation factor 3 (eIF-3) complex.

The protein resides in the cytoplasm. RNA-binding component of the eukaryotic translation initiation factor 3 (eIF-3) complex, which is involved in protein synthesis of a specialized repertoire of mRNAs and, together with other initiation factors, stimulates binding of mRNA and methionyl-tRNAi to the 40S ribosome. The eIF-3 complex specifically targets and initiates translation of a subset of mRNAs involved in cell proliferation. This subunit can bind 18S rRNA. This Bombyx mori (Silk moth) protein is Eukaryotic translation initiation factor 3 subunit G.